Consider the following 313-residue polypeptide: Putative S-adenosyl-L-methionine-dependent methyltransferase MAP_4064c (313 aa).

S-adenosyl-L-methionine contacts are provided by residues Asp129 and 158–159 (DL).

It belongs to the UPF0677 family.

Its function is as follows. Exhibits S-adenosyl-L-methionine-dependent methyltransferase activity. This chain is Putative S-adenosyl-L-methionine-dependent methyltransferase MAP_4064c, found in Mycolicibacterium paratuberculosis (strain ATCC BAA-968 / K-10) (Mycobacterium paratuberculosis).